Reading from the N-terminus, the 146-residue chain is Probable NADH dehydrogenase [ubiquinone] 1 alpha subcomplex subunit 12 (146 aa).

This sequence belongs to the complex I NDUFA12 subunit family. In terms of assembly, complex I is composed of 45 different subunits.

It is found in the mitochondrion inner membrane. Its function is as follows. Accessory subunit of the mitochondrial membrane respiratory chain NADH dehydrogenase (Complex I), that is believed not to be involved in catalysis. Complex I functions in the transfer of electrons from NADH to the respiratory chain. The immediate electron acceptor for the enzyme is believed to be ubiquinone. This is Probable NADH dehydrogenase [ubiquinone] 1 alpha subcomplex subunit 12 from Caenorhabditis elegans.